The chain runs to 167 residues: Lipoprotein signal peptidase (167 aa).

The next 3 membrane-spanning stretches (helical) occupy residues 10–30 (LIWLLLSIAIIALDQATKAWV), 68–88 (WQMWLFIALALGISGLLTFWL), and 98–118 (SALPYALIIGGGIGNVIDRFL). Catalysis depends on residues aspartate 124 and aspartate 142. A helical transmembrane segment spans residues 138-158 (FNLADSAIVAGAIGIGLLSLF).

Belongs to the peptidase A8 family.

The protein resides in the cell inner membrane. The enzyme catalyses Release of signal peptides from bacterial membrane prolipoproteins. Hydrolyzes -Xaa-Yaa-Zaa-|-(S,diacylglyceryl)Cys-, in which Xaa is hydrophobic (preferably Leu), and Yaa (Ala or Ser) and Zaa (Gly or Ala) have small, neutral side chains.. The protein operates within protein modification; lipoprotein biosynthesis (signal peptide cleavage). In terms of biological role, this protein specifically catalyzes the removal of signal peptides from prolipoproteins. The protein is Lipoprotein signal peptidase of Xylella fastidiosa (strain 9a5c).